We begin with the raw amino-acid sequence, 1893 residues long: CDK5 regulatory subunit-associated protein 2 (1893 aa).

A CM1 motif; interacts with the gTuRC region spans residues 51-94 (TVSPTRARNMKDFENQITELKKENFNLKLRIYFLEERMQQEFHG). An interaction with NCKAP5L region spans residues 58–196 (RNMKDFENQI…TEKALRLRLE (139 aa)). Phosphoserine is present on S547. The interval 926–1208 (PGITNREAKK…LENLKQQLEE (283 aa)) is interaction with MAPRE1. T1001 carries the post-translational modification Phosphothreonine. Disordered regions lie at residues 1015-1071 (AAYQ…NPED) and 1084-1105 (SKSQPSAKVSVMGTDQSESINT). Over residues 1034-1048 (WRDKEMDSDQQRSYE) the composition is skewed to basic and acidic residues. S1238 is modified (phosphoserine). The disordered stretch occupies residues 1347-1381 (LPESPEPSASHALSDYETSEKSFFSRDQKQDNETE). Residues 1364 to 1381 (TSEKSFFSRDQKQDNETE) show a composition bias toward basic and acidic residues. Position 1490 is a phosphoserine (S1490). 2 stretches are compositionally biased toward basic and acidic residues: residues 1500–1519 (SVKEENERLQKEGSEKERHN) and 1651–1661 (PDKHDGDKYPM). 3 disordered regions span residues 1500–1521 (SVKEENERLQKEGSEKERHNQQ), 1646–1706 (EVPL…ATST), and 1754–1774 (QTQEAPSSTSQELGTKGPHPA). Residues S1663 and S1666 each carry the phosphoserine modification. 2 stretches are compositionally biased toward polar residues: residues 1663–1706 (SDNS…ATST) and 1754–1766 (QTQEAPSSTSQEL). The tract at residues 1726–1768 (HVLGLIEDYEALLKQISQGQRLLAEMDIQTQEAPSSTSQELGT) is interaction with CDK5R1. The interval 1726-1893 (HVLGLIEDYE…GTCSPSRPGS (168 aa)) is interaction with PCNT and AKAP9. The interval 1861–1870 (VVTHKILRKA) is required for centrosomal attachment, Golgi localization and CALM1 interaction. S1893 carries the post-translational modification Phosphoserine.

In terms of assembly, homodimer. Interacts with CDK5R1 (p35 form). CDK5RAP1, CDK5RAP2 and CDK5RAP3 show competitive binding to CDK5R1. May form a complex with CDK5R1 and CDK5. Interacts with pericentrin/PCNT; the interaction is leading to centrosomal and Golgi localization of CDK5RAP2 and PCNT. Interacts with AKAP9; the interaction targets CDK5RAP2 and AKAP9 to Golgi apparatus. Interacts with MAPRE1; the interaction is direct and targets CDK5RAP2 and EB1/MAPRE1 to microtubule plus ends. Interacts with TUBG1; the interaction is leading to the centrosomal localization of CDK5RAP2 and TUBG1. Interacts with TUBGCP3. Interacts with CALM1. Interacts with CDC20. Interacts with CEP68; degradation of CEP68 in early mitosis leads to removal of CDK5RAP2 from the centrosome which promotes centriole disengagement and subsequent centriole separation. Interacts with NCKAP5L. Forms a pericentrosomal complex with AKAP9, MAPRE1 and PDE4DIP isoform 13/MMG8/SMYLE; within this complex, MAPRE1 binding to CDK5RAP2 may be mediated by PDE4DIP. Interacts with LGALS3BP; this interaction may connect the pericentrosomal complex to the gamma-tubulin ring complex (gTuRC) to promote microtubule assembly and acetylation. Interacts with CCDC66. Associates (via CM1 motif) with TUBGCP2 of the gTuRC; the interaction plays a role in gTuRC activation. Post-translationally, phosphorylated in vitro by CDK5. As to expression, widely expressed. Expressed in heart, brain, placenta, lung, liver, skeletal muscle, kidney and pancreas.

The protein resides in the cytoplasm. Its subcellular location is the cytoskeleton. The protein localises to the microtubule organizing center. It localises to the centrosome. It is found in the golgi apparatus. In terms of biological role, potential regulator of CDK5 activity via its interaction with CDK5R1. Negative regulator of centriole disengagement (licensing) which maintains centriole engagement and cohesion. Involved in regulation of mitotic spindle orientation. Plays a role in the spindle checkpoint activation by acting as a transcriptional regulator of both BUBR1 and MAD2 promoter. Together with EB1/MAPRE1, may promote microtubule polymerization, bundle formation, growth and dynamics at the plus ends. Regulates centrosomal maturation by recruitment of the gamma-tubulin ring complex (gTuRC) onto centrosomes. In complex with PDE4DIP isoform 13/MMG8/SMYLE, MAPRE1 and AKAP9, contributes to microtubules nucleation and extension from the centrosome to the cell periphery. Required for the recruitment of AKAP9 to centrosomes. Plays a role in neurogenesis. In Homo sapiens (Human), this protein is CDK5 regulatory subunit-associated protein 2 (CDK5RAP2).